The sequence spans 209 residues: MAEKLGILGRKVGMTRIFASDGSAVAVTVIQAGPCPVIQVRNGETDGYDAVQIAFEEAKEKHVTKPARGHFAKAGKGLFRNLREIRLEAPAEFEVGQELTVSLFAAGEKVKVTGTSIGKGYQGVMRRWNFAGSKDTHGCEKVHRSGGSIGNNTFPGHVFKGKKMAGHWGDERVTVKNLEIVDIRAEDNVILVKGAVPGPKNGLVLVRKQ.

Belongs to the universal ribosomal protein uL3 family. In terms of assembly, part of the 50S ribosomal subunit. Forms a cluster with proteins L14 and L19.

One of the primary rRNA binding proteins, it binds directly near the 3'-end of the 23S rRNA, where it nucleates assembly of the 50S subunit. This Nitratidesulfovibrio vulgaris (strain DSM 19637 / Miyazaki F) (Desulfovibrio vulgaris) protein is Large ribosomal subunit protein uL3.